A 401-amino-acid polypeptide reads, in one-letter code: L-threonine ammonia-lyase (401 aa).

Lys-51 carries the N6-(pyridoxal phosphate)lysine modification. Pyridoxal 5'-phosphate contacts are provided by residues Asn-78, 178 to 181 (GGGL), and Ser-301. Residues 326–401 (FIETFVMDRP…AKGYEVRIVG (76 aa)) form the ACT domain.

Belongs to the serine/threonine dehydratase family. In terms of assembly, homotetramer. It depends on pyridoxal 5'-phosphate as a cofactor.

The catalysed reaction is L-threonine = 2-oxobutanoate + NH4(+). The enzyme catalyses L-serine = pyruvate + NH4(+). Its pathway is amino-acid biosynthesis; L-isoleucine biosynthesis; 2-oxobutanoate from L-threonine: step 1/1. With respect to regulation, activity is insensitive to allosteric regulators L-valine and L-isoleucine at low concentrations, while these L-amino acids are inhibitors at high concentrations. Is insensitive to ammonium chloride and AMP. Inhibited in the presence of aminoxyacetic acid (AOAA), an inhibitor of pyridoxal phosphate-dependent enzymes. In terms of biological role, catalyzes the conversion of L-threonine to 2-oxobutanoate and ammonia. Can also use L-serine, but the catalytic efficiency toward L-threonine is about sixfold higher than that toward L-serine. Also shows weak activity toward L-allo-threonine, but cannot use the corresponding D-amino acids. Does not exhibit racemase activity toward various amino acids, including serine. Physiologically, is likely involved in the threonine-dependent pathway of isoleucine biosynthesis. The protein is L-threonine ammonia-lyase of Thermotoga maritima (strain ATCC 43589 / DSM 3109 / JCM 10099 / NBRC 100826 / MSB8).